Reading from the N-terminus, the 478-residue chain is MDTSDLFASCRKGDVGRVRYLLEQRDVEVNVRDKWDSTPLYYACLCGHEELVRYLLANGARCEANTFDGERCLYGALSDPIRRALRDYKQVTASCRRRDYYDDFLQRLLEQGIHSDVVFVVHGKPFRAHRCILGARSTYFANMLDTKWKGKSVVVLRHPLINPVAFGALLQYLYTGRLDIGVEHVSDCERLAKQCQLWDLLDDLEAKCEKVSEFVASKPGTCVKVLTIEPPPADPRLRADMALLADCALPPELRGDLGELPFPCPDGFSSCPDICFRVADSSFLCHKAFFCGRSDYFRALLDDHFRESEEPVASGDPPVVTLHDISPDIFTHVLYYVYSDHTELPPELAYDVLSVADMYLLPGLKRLCGRSLAQLLEEDSVVGVWRIAKLFRLARLEDQCTEYMAKVIEKLVEREDFVEAVREEAAAVAARQETDSIPLVDDIRFHVASTVQTYSAIEEAQQQLRALENLLVSIGLDC.

2 ANK repeats span residues 1-31 (MDTS…EVNV) and 35-64 (WDST…RCEA). 2 consecutive BTB domains span residues 115 to 182 (SDVV…DIGV) and 272 to 346 (PDIC…ELPP). The stretch at 450-478 (TVQTYSAIEEAQQQLRALENLLVSIGLDC) forms a coiled coil.

The protein resides in the cytoplasm. In terms of biological role, may act as a mediator of the PTEN growth-suppressive signaling pathway. May play a role in developmental processes. This chain is Ankyrin repeat and BTB/POZ domain-containing protein 1, found in Rattus norvegicus (Rat).